A 453-amino-acid polypeptide reads, in one-letter code: Folate transporter 1 (453 aa).

N-linked (GlcNAc...) asparagine glycosylation occurs at asparagine 36. 5 helical membrane-spanning segments follow: residues 48-68, 73-93, 102-122, 136-156, and 161-181; these read PYWT…TDIL, IVMI…FGKG, VSFG…YSIV, AAAL…ISTH, and LVLN…AIFL. A glycan (N-linked (GlcNAc...) asparagine) is linked at asparagine 260. 5 helical membrane passes run 276–296, 306–326, 331–351, 368–388, and 401–421; these read VANG…SLFI, HGQM…YLCS, VLVA…LITA, IFGC…LVVV, and FVIY…FFMI.

It belongs to the reduced folate carrier (RFC) transporter (TC 2.A.48) family. As to expression, highly expressed in pharynx and posterior part of the intestine. Expressed at lower levels in the body wall muscles, head muscles, and vulva muscles. Highly expressed in the intestine of the early larva, levels decrease in the later stages of development.

Its subcellular location is the membrane. In terms of biological role, folate transporter. The sequence is that of Folate transporter 1 (folt-1) from Caenorhabditis elegans.